A 344-amino-acid polypeptide reads, in one-letter code: Leucine-rich repeat-containing protein 75A (344 aa).

Residues 1 to 25 (MGTRQTKGSLAERASPGAAPGPRRE) form a disordered region. Residues 11-21 (AERASPGAAPG) are compositionally biased toward low complexity. LRR repeat units lie at residues 204–217 (VDSVELGFTGLTDD) and 229–242 (LPRLTTLALNGNRL). Residues 295-344 (LPTILELGEGPGSGEEVREGTVGQEDPGGGPVAPAEDHHEGKETVAAAQT) are disordered.

Belongs to the LRRC75 family.

This is Leucine-rich repeat-containing protein 75A (LRRC75A) from Homo sapiens (Human).